The following is a 1149-amino-acid chain: Polyprotein nsP1234 (1149 aa).

Positions 1-160 (APSYRVRRTD…KIQEAIDRRT (160 aa)) constitute a Macro domain. The ADP-D-ribose site is built by Asp-10, Asn-24, Gly-32, Gly-112, Val-113, and Phe-114. The Zn(2+) site is built by Cys-262, Cys-264, Cys-287, and Cys-305. Residue Thr-344 is modified to Phosphothreonine; by host. 2 short sequence motifs (FGDF; binding to host G3BP1) span residues 512–515 (FGDF) and 523–526 (FGDI). The region spanning 903-1018 (DAVLETDIAS…HGVRSDPLMA (116 aa)) is the RdRp catalytic domain.

In terms of assembly, interacts with mRNA-capping enzyme nsP1. Interacts with host DDX1. RNA-directed Interacts with host DDX3. Interacts (via C-terminus) with host G3BP1; this interaction inhibits the formation of host stress granules on viral mRNAs and the nsp3-G3BP1 complexes bind viral RNAs and probably orchestrate the assembly of viral replication complexes. Interacts (via C-terminus) with host G3BP2; this interaction inhibits the formation of host stress granules on viral mRNAs and the nsp3-G3BP2 complexes bind viral RNAs and probably orchestrate the assembly of viral replication complexes. As to quaternary structure, interacts with itself. Interacts with mRNA-capping enzyme nsP1. Interacts with protease nsP2. Interacts with itself. Mg(2+) serves as cofactor. Requires Mn(2+) as cofactor. Post-translationally, polyprotein P1234: Specific enzymatic cleavages in vivo yield mature proteins. The processing of the polyprotein is temporally regulated. In early stages (1.7 hpi), P1234 is first cleaved in trans through its nsP2 protease activity, releasing P123' and nsP4, which associate to form the early replication complex. At the same time, P1234 is also cut at the nsP1/nsP2 site early in infection but with lower efficiency. After replication of the viral minus-strand RNAs (4 hpi), the polyproteins are cut at the nsP1/nsP2 and nsP2/nsP3 sites very efficiently, preventing accumulation of P123' and P1234 and allowing the formation of the late replication complex. NsP3'/nsP4 site is not cleaved anymore and P34 is produced rather than nsP4. Specific enzymatic cleavages in vivo yield mature proteins. The processing of the polyprotein is temporally regulated. In early stages (1.7 hpi), P123 is cleaved at the nsP1/nsP2 site with low efficiency. After replication of the viral minus-strand RNAs (4 hpi), the polyproteins are cut at the nsP1/nsP2 and nsP2/nsP3 sites very efficiently, preventing accumulation of P123 and allowing the formation of the late replication complex. In terms of processing, phosphorylated by host on serines and threonines. Post-translationally, ubiquitinated; targets the protein for rapid degradation via the ubiquitin system. Nsp4 is present in extremely low quantities due to low frequency of translation through the amber stop-codon and the degradation by the ubiquitin pathway.

The protein localises to the host cytoplasmic vesicle membrane. It catalyses the reaction RNA(n) + a ribonucleoside 5'-triphosphate = RNA(n+1) + diphosphate. The catalysed reaction is 4-O-(ADP-D-ribosyl)-L-aspartyl-[protein] + H2O = L-aspartyl-[protein] + ADP-D-ribose + H(+). It carries out the reaction 5-O-(ADP-D-ribosyl)-L-glutamyl-[protein] + H2O = L-glutamyl-[protein] + ADP-D-ribose + H(+). The enzyme catalyses RNA(n) + ATP = RNA(n)-3'-adenine ribonucleotide + diphosphate. It catalyses the reaction ADP-alpha-D-ribose 1''-phosphate + H2O = ADP-D-ribose + phosphate. Its function is as follows. Polyprotein P1234: Inactive precursor of the viral replicase, which is activated by cleavages carried out by the viral protease nsP2. The early replication complex formed by the polyprotein P123 and nsP4 synthesizes minus-strand RNAs. As soon P123 is cleaved into mature proteins, the plus-strand RNAs synthesis begins. In terms of biological role, the early replication complex formed by the polyprotein P123' and nsP4 synthesizes minus-strand RNAs. Polyprotein P123' is a short-lived polyprotein that accumulates during early stage of infection. As soon P123' is cleaved into mature proteins, the plus-strand RNAs synthesis begins. Functionally, seems to be essential for minus-strand RNAs and subgenomic 26S mRNAs synthesis. Displays mono-ADP-ribosylhydrolase activity. ADP-ribosylation is a post-translational modification that controls various processes of the host cell and the virus probably needs to revert it for optimal viral replication. Binds proteins of FXR family and sequesters them into the viral RNA replication complexes thereby inhibiting the formation of host stress granules on viral mRNAs. The nsp3'-FXR complexes bind viral RNAs and probably orchestrate the assembly of viral replication complexes, thanks to the ability of FXR family members to self-assemble and bind DNA. Its function is as follows. Seems to be essential for minus-strand RNAs and subgenomic 26S mRNAs synthesis. Displays mono-ADP-ribosylhydrolase activity. ADP-ribosylation is a post-translational modification that controls various processes of the host cell and the virus probably needs to revert it for optimal viral replication. Binds proteins of G3BP family and sequesters them into the viral RNA replication complexes thereby inhibiting the formation of host stress granules on viral mRNAs. The nsp3-G3BP complexes bind viral RNAs and probably orchestrate the assembly of viral replication complexes, thanks to the ability of G3BP family members to self-assemble and bind DNA. RNA dependent RNA polymerase. Replicates genomic and antigenomic RNA by recognizing replications specific signals. The early replication complex formed by the polyprotein P123 and nsP4 synthesizes minus-strand RNAs. The late replication complex composed of fully processed nsP1-nsP4 is responsible for the production of genomic and subgenomic plus-strand RNAs. This Ross river virus (strain T48) (RRV) protein is Polyprotein nsP1234.